The following is a 175-amino-acid chain: Translation initiation factor IF-3 (175 aa).

It belongs to the IF-3 family. In terms of assembly, monomer.

The protein localises to the cytoplasm. Functionally, IF-3 binds to the 30S ribosomal subunit and shifts the equilibrium between 70S ribosomes and their 50S and 30S subunits in favor of the free subunits, thus enhancing the availability of 30S subunits on which protein synthesis initiation begins. The sequence is that of Translation initiation factor IF-3 from Chlamydia trachomatis serovar D (strain ATCC VR-885 / DSM 19411 / UW-3/Cx).